We begin with the raw amino-acid sequence, 1043 residues long: Protein translocase subunit SecA (1043 aa).

Residues glutamine 143, 161 to 165 (GEGKT), and aspartate 665 each bind ATP. Residues 980–1005 (ATAAPAAETTTTAKAADAARQQPPAA) show a composition bias toward low complexity. Positions 980–1043 (ATAAPAAETT…KYKHCHGRNA (64 aa)) are disordered. Positions 1008 to 1022 (EEQKRQPVHVEKTPG) are enriched in basic and acidic residues. 4 residues coordinate Zn(2+): cysteine 1027, cysteine 1029, cysteine 1038, and histidine 1039. Basic residues predominate over residues 1033–1043 (KKYKHCHGRNA).

It belongs to the SecA family. In terms of assembly, monomer and homodimer. Part of the essential Sec protein translocation apparatus which comprises SecA, SecYEG and auxiliary proteins SecDF. Other proteins may also be involved. Zn(2+) serves as cofactor.

It is found in the cell inner membrane. The protein resides in the cytoplasm. The enzyme catalyses ATP + H2O + cellular proteinSide 1 = ADP + phosphate + cellular proteinSide 2.. Functionally, part of the Sec protein translocase complex. Interacts with the SecYEG preprotein conducting channel. Has a central role in coupling the hydrolysis of ATP to the transfer of proteins into and across the cell membrane, serving as an ATP-driven molecular motor driving the stepwise translocation of polypeptide chains across the membrane. This is Protein translocase subunit SecA from Chloroherpeton thalassium (strain ATCC 35110 / GB-78).